The chain runs to 230 residues: Uracil-DNA glycosylase (230 aa).

The active-site Proton acceptor is the aspartate 70.

It belongs to the uracil-DNA glycosylase (UDG) superfamily. UNG family.

Its subcellular location is the cytoplasm. The catalysed reaction is Hydrolyzes single-stranded DNA or mismatched double-stranded DNA and polynucleotides, releasing free uracil.. In terms of biological role, excises uracil residues from the DNA which can arise as a result of misincorporation of dUMP residues by DNA polymerase or due to deamination of cytosine. The polypeptide is Uracil-DNA glycosylase (Pseudomonas entomophila (strain L48)).